Consider the following 271-residue polypeptide: Neurexophilin-1 (271 aa).

The signal sequence occupies residues 1 to 21; sequence MQAACWYVLFLLQPTVYLVTC. The tract at residues 22-97 is II; that stretch reads ANLTNGGKSE…WDWLRNSTDL (76 aa). N-linked (GlcNAc...) asparagine glycans are attached at residues Asn-23, Asn-68, Asn-93, Asn-146, Asn-156, and Asn-162. Residues 98-176 form an III region; that stretch reads QEPRPRAKRR…LVPPTKIVEF (79 aa). The IV (linker domain) stretch occupies residues 177-185; the sequence is DLAQQTVID. Residues 186-271 form a v (Cys-rich) region; the sequence is AKDSKSFNCR…HSDTPYFPSG (86 aa).

The protein belongs to the neurexophilin family.

The protein localises to the secreted. Functionally, may be signaling molecules that resemble neuropeptides and that act by binding to alpha-neurexins and possibly other receptors. The chain is Neurexophilin-1 (NXPH1) from Homo sapiens (Human).